The primary structure comprises 534 residues: Cytokine-like nuclear factor N-PAC (534 aa).

In terms of domain architecture, PWWP spans 8 to 66; it reads QGDLVWGKLGRYPPWPGKIVNPPKDLKKPRGKKCLFVKFFGTEDHAWIKVEQLKPYHAH. Basic and acidic residues-rich tracts occupy residues 93-122 and 138-157; these read AKAK…QTGE and RSRD…DKDS. The tract at residues 93–168 is disordered; that stretch reads AKAKEHAKEH…SPQPSSLKKL (76 aa). A DNA-binding region (a.T hook) is located at residues 144–156; that stretch reads PRKRGRPPKDDKD. The tract at residues 190–193 is interaction with histone H3; the sequence is DSWL. The dehydrogenase domain stretch occupies residues 242–534; sequence GNIIPTDKKI…MSAVYRAYIH (293 aa). NAD(+) is bound by residues 252–266, threonine 343, and lysine 486; that span reads GFLG…IVSN.

The protein belongs to the HIBADH-related family. NP60 subfamily. In terms of assembly, homotetramere. Binds to mononucleosomes.

It is found in the nucleus. The protein resides in the chromosome. Its function is as follows. Cytokine-like nuclear factor with chromatin gene reader activity involved in chromatin modification and regulation of gene expression. Acts as a nucleosome-destabilizing factor that is recruited to genes during transcriptional activation. Recognizes and binds histone H3 without a preference for specific epigenetic markers and also binds DNA. Interacts with KDM1B and promotes its histone demethylase activity by facilitating the capture of H3 tails, they form a multifunctional enzyme complex that modifies transcribed chromatin and facilitates Pol II transcription through nucleosomes. This is Cytokine-like nuclear factor N-PAC (glyr1) from Xenopus tropicalis (Western clawed frog).